We begin with the raw amino-acid sequence, 133 residues long: p53 and DNA damage-regulated protein 1 (133 aa).

This sequence belongs to the prefoldin subunit beta family. As to quaternary structure, component of the PAQosome complex which is responsible for the biogenesis of several protein complexes and which consists of R2TP complex members RUVBL1, RUVBL2, RPAP3 and PIH1D1, URI complex members PFDN2, PFDN6, PDRG1, UXT and URI1 as well as ASDURF, POLR2E and DNAAF10/WDR92.

The protein resides in the cytoplasm. Its function is as follows. May play a role in chaperone-mediated protein folding. The chain is p53 and DNA damage-regulated protein 1 (Pdrg1) from Rattus norvegicus (Rat).